We begin with the raw amino-acid sequence, 231 residues long: Isoprenyl transferase (231 aa).

D14 is an active-site residue. Residue D14 participates in Mg(2+) binding. Residues 15–18 (GNGR), W19, R27, H31, and 59–61 (STE) each bind substrate. N62 acts as the Proton acceptor in catalysis. Residues W63, R65, R176, and 182 to 184 (RIS) contribute to the substrate site. Mg(2+) is bound at residue E195.

It belongs to the UPP synthase family. In terms of assembly, homodimer. The cofactor is Mg(2+).

Its function is as follows. Catalyzes the condensation of isopentenyl diphosphate (IPP) with allylic pyrophosphates generating different type of terpenoids. In Aquifex pyrophilus, this protein is Isoprenyl transferase.